A 256-amino-acid chain; its full sequence is 6-phosphogluconolactonase (256 aa).

It belongs to the glucosamine/galactosamine-6-phosphate isomerase family. 6-phosphogluconolactonase subfamily.

It catalyses the reaction 6-phospho-D-glucono-1,5-lactone + H2O = 6-phospho-D-gluconate + H(+). The protein operates within carbohydrate degradation; pentose phosphate pathway; D-ribulose 5-phosphate from D-glucose 6-phosphate (oxidative stage): step 2/3. Its function is as follows. Hydrolysis of 6-phosphogluconolactone to 6-phosphogluconate. This is 6-phosphogluconolactonase (pgl) from Chlamydia trachomatis serovar D (strain ATCC VR-885 / DSM 19411 / UW-3/Cx).